The following is a 316-amino-acid chain: Ribosomal RNA small subunit methyltransferase H (316 aa).

S-adenosyl-L-methionine-binding positions include 35–37 (GGH), Asp-55, Phe-79, Asp-101, and Gln-108.

This sequence belongs to the methyltransferase superfamily. RsmH family.

It localises to the cytoplasm. It catalyses the reaction cytidine(1402) in 16S rRNA + S-adenosyl-L-methionine = N(4)-methylcytidine(1402) in 16S rRNA + S-adenosyl-L-homocysteine + H(+). Specifically methylates the N4 position of cytidine in position 1402 (C1402) of 16S rRNA. The chain is Ribosomal RNA small subunit methyltransferase H from Vibrio campbellii (strain ATCC BAA-1116).